A 976-amino-acid chain; its full sequence is Ephrin type-B receptor 4b (976 aa).

Residues 1–23 (MDRVCWIMALSWFWMVSTGLVSA) form the signal peptide. Over 24–541 (EEEVLMNTKL…ESPSRLMLTG (518 aa)) the chain is Extracellular. The region spanning 25 to 204 (EEVLMNTKLE…FFKKCPAVSR (180 aa)) is the Eph LBD domain. 2 cysteine pairs are disulfide-bonded: Cys-69–Cys-186 and Cys-103–Cys-113. Fibronectin type-III domains lie at 326–434 (PPSA…TSRD) and 438–529 (PVSG…TLPD). Residues 542-562 (VLVAIGLLILIAVVIVAVFCF) traverse the membrane as a helical segment. The Cytoplasmic segment spans residues 563–976 (RRSTRRRDPD…LRIHGGSLRY (414 aa)). In terms of domain architecture, Protein kinase spans 613–897 (VKIEEVIGAG…IPDGPSHPLL (285 aa)). Residues 619-627 (IGAGEFGEV) and Lys-645 each bind ATP. The active-site Proton acceptor is Asp-738. Positions 906–970 (SHCSSVADWL…LSSVQTLRIH (65 aa)) constitute an SAM domain.

This sequence belongs to the protein kinase superfamily. Tyr protein kinase family. Ephrin receptor subfamily.

The protein localises to the cell membrane. The enzyme catalyses L-tyrosyl-[protein] + ATP = O-phospho-L-tyrosyl-[protein] + ADP + H(+). Functionally, receptor tyrosine kinase which binds promiscuously transmembrane ephrin-B family ligands residing on adjacent cells, leading to contact-dependent bidirectional signaling into neighboring cells. The signaling pathway downstream of the receptor is referred to as forward signaling while the signaling pathway downstream of the ephrin ligand is referred to as reverse signaling. Together with its cognate ligand/functional ligand EFNB2 is involved in the regulation of cell adhesion and cell migration, and plays a central role in heart morphogenesis, angiogenesis and blood vessel remodeling and permeability. EPHB4-mediated forward signaling controls cellular repulsion and segregation from EFNB2-expressing cells. Involved in somitogenesis. This is Ephrin type-B receptor 4b from Danio rerio (Zebrafish).